Reading from the N-terminus, the 281-residue chain is MTDRYAVFGHPVAHSKSPQIHATFGRQEGIAVDYRAIDLAPEAFLAGLEAFAADGGVGANVTSPHKEAAFSVCTTLTARARRAGSVNTLLRKGDRWHGDTTDGIGLVRDLTDRHGLDLRGRRMLLIGAGGSARSVAPALLDAGITELVVVNRTPERADELIDAMGEPGRAISRYWEDLRDLGDFELIVNATSAGRDRDIEFKLPLSLVNSMTTAVDLNYGEAAIAFLAWARAAECRNTVDGLGMLVEQAAESFLQWHGVRPQTDEVYQSLRQGSAVLAGED.

Shikimate is bound by residues 15 to 17 and Thr-62; that span reads SKS. Lys-66 functions as the Proton acceptor in the catalytic mechanism. The shikimate site is built by Asn-87 and Asp-102. NADP(+) is bound by residues 127-131, 151-156, and Leu-217; these read GAGGS and NRTPER. Residue Tyr-219 participates in shikimate binding. Gly-241 lines the NADP(+) pocket.

The protein belongs to the shikimate dehydrogenase family. Homodimer.

The catalysed reaction is shikimate + NADP(+) = 3-dehydroshikimate + NADPH + H(+). The protein operates within metabolic intermediate biosynthesis; chorismate biosynthesis; chorismate from D-erythrose 4-phosphate and phosphoenolpyruvate: step 4/7. Its function is as follows. Involved in the biosynthesis of the chorismate, which leads to the biosynthesis of aromatic amino acids. Catalyzes the reversible NADPH linked reduction of 3-dehydroshikimate (DHSA) to yield shikimate (SA). This is Shikimate dehydrogenase (NADP(+)) from Stenotrophomonas maltophilia (strain K279a).